A 227-amino-acid polypeptide reads, in one-letter code: Probable GTP-binding protein EngB (227 aa).

The EngB-type G domain maps to 41–216 (GRPEVAFAGR…RAEIARFAVP (176 aa)). Residues 49 to 56 (GRSNVGKS), 76 to 80 (GRTKQ), 94 to 97 (DMPG), 161 to 164 (TKCD), and 195 to 197 (TSS) contribute to the GTP site. Mg(2+) is bound by residues serine 56 and threonine 78.

Belongs to the TRAFAC class TrmE-Era-EngA-EngB-Septin-like GTPase superfamily. EngB GTPase family. The cofactor is Mg(2+).

Its function is as follows. Necessary for normal cell division and for the maintenance of normal septation. This chain is Probable GTP-binding protein EngB, found in Gluconobacter oxydans (strain 621H) (Gluconobacter suboxydans).